Here is a 337-residue protein sequence, read N- to C-terminus: Tryptophan--tRNA ligase (337 aa).

ATP-binding positions include 11 to 13 and 19 to 20; these read QPT and GN. Positions 12 to 20 match the 'HIGH' region motif; the sequence is PTGALHLGN. D135 lines the L-tryptophan pocket. Residues 147 to 149, V191, and 200 to 204 contribute to the ATP site; these read GED and KMSKS. The short motif at 200-204 is the 'KMSKS' region element; it reads KMSKS.

This sequence belongs to the class-I aminoacyl-tRNA synthetase family. In terms of assembly, homodimer.

The protein localises to the cytoplasm. It carries out the reaction tRNA(Trp) + L-tryptophan + ATP = L-tryptophyl-tRNA(Trp) + AMP + diphosphate + H(+). Its function is as follows. Catalyzes the attachment of tryptophan to tRNA(Trp). This is Tryptophan--tRNA ligase from Prochlorococcus marinus (strain MIT 9313).